The sequence spans 86 residues: Phosphocarrier protein HPr (86 aa).

The HPr domain maps to 1–86; that stretch reads MVKKEAIIKA…LAELIESFKE (86 aa). The active-site Pros-phosphohistidine intermediate is the His-15.

It belongs to the HPr family.

It localises to the cytoplasm. Its function is as follows. General (non sugar-specific) component of the phosphoenolpyruvate-dependent sugar phosphotransferase system (sugar PTS). This major carbohydrate active-transport system catalyzes the phosphorylation of incoming sugar substrates concomitantly with their translocation across the cell membrane. The phosphoryl group from phosphoenolpyruvate (PEP) is transferred to the phosphoryl carrier protein HPr by enzyme I. Phospho-HPr then transfers it to the PTS EIIA domain. The chain is Phosphocarrier protein HPr (ptsH) from Borreliella burgdorferi (strain ATCC 35210 / DSM 4680 / CIP 102532 / B31) (Borrelia burgdorferi).